We begin with the raw amino-acid sequence, 654 residues long: Fatty acid photodecarboxylase, chloroplastic (654 aa).

Residues 1–62 (MASITSRASA…RRGGALSARA (62 aa)) constitute a chloroplast transit peptide. FAD contacts are provided by residues 93–94 (TA), Glu-114, Leu-162, Ser-166, 170–173 (NATL), and Val-298. Hexadecanoate is bound by residues Cys-432, Arg-451, Tyr-466, and Gln-486. Gly-622 lines the FAD pocket.

The protein belongs to the GMC oxidoreductase family. Requires FAD as cofactor.

Its subcellular location is the plastid. It is found in the chloroplast. The enzyme catalyses a long-chain fatty acid + hnu + H(+) = a long-chain alkane + CO2. The catalysed reaction is hnu + hexadecanoate + H(+) = pentadecane + CO2. It carries out the reaction hnu + octadecanoate + H(+) = heptadecane + CO2. It catalyses the reaction heptadecanoate + hnu + H(+) = hexadecane + CO2. The enzyme catalyses hnu + tetradecanoate + H(+) = tridecane + CO2. The catalysed reaction is octanoate + hnu + H(+) = heptane + CO2. Its activity is regulated as follows. Activated by blue light and repressed by red light. Catalyzes the decarboxylation of free fatty acids to n-alkanes or n-alkenes in response to blue light. Substrate preference is toward fatty acids with C16 or C17 chains. Converts n-octanoic acid (C8 chain) more efficiently than palmitate (n-hexadecanoic acid, C16 chain) into n-heptane (C7 chain) and n-pentadecane (C15 chain), respectively, partly due to an autocatalytic effect of its n-heptane product. Saturated fatty acids are converted to alkanes, not alkenes. The decarboxylation is initiated through electron abstraction from the fatty acid by the photo-excited FAD. The polypeptide is Fatty acid photodecarboxylase, chloroplastic (Chlorella variabilis (Green alga)).